The chain runs to 175 residues: Adenine phosphoribosyltransferase (175 aa).

The protein belongs to the purine/pyrimidine phosphoribosyltransferase family. Homodimer.

Its subcellular location is the cytoplasm. It carries out the reaction AMP + diphosphate = 5-phospho-alpha-D-ribose 1-diphosphate + adenine. Its pathway is purine metabolism; AMP biosynthesis via salvage pathway; AMP from adenine: step 1/1. Its function is as follows. Catalyzes a salvage reaction resulting in the formation of AMP, that is energically less costly than de novo synthesis. The chain is Adenine phosphoribosyltransferase from Lactobacillus acidophilus (strain ATCC 700396 / NCK56 / N2 / NCFM).